The following is a 311-amino-acid chain: Pyrimidine-specific ribonucleoside hydrolase RihA (311 aa).

H240 is a catalytic residue.

The protein belongs to the IUNH family. RihA subfamily.

In terms of biological role, hydrolyzes with equal efficiency cytidine or uridine to ribose and cytosine or uracil, respectively. This chain is Pyrimidine-specific ribonucleoside hydrolase RihA, found in Escherichia coli (strain SMS-3-5 / SECEC).